Reading from the N-terminus, the 303-residue chain is Phosphatidylglycerol--prolipoprotein diacylglyceryl transferase (303 aa).

4 consecutive transmembrane segments (helical) span residues 18–38 (LGPF…LVGL), 58–78 (LLPI…VAFE), 106–126 (IWGG…SIIF), and 133–153 (EPFW…QAIG). Arginine 154 provides a ligand contact to a 1,2-diacyl-sn-glycero-3-phospho-(1'-sn-glycerol). 3 helical membrane-spanning segments follow: residues 193-213 (PTFL…IFLF), 223-243 (LPPG…RFWI), and 266-286 (IAQL…WRIY).

It belongs to the Lgt family.

Its subcellular location is the cell inner membrane. It carries out the reaction L-cysteinyl-[prolipoprotein] + a 1,2-diacyl-sn-glycero-3-phospho-(1'-sn-glycerol) = an S-1,2-diacyl-sn-glyceryl-L-cysteinyl-[prolipoprotein] + sn-glycerol 1-phosphate + H(+). It functions in the pathway protein modification; lipoprotein biosynthesis (diacylglyceryl transfer). Functionally, catalyzes the transfer of the diacylglyceryl group from phosphatidylglycerol to the sulfhydryl group of the N-terminal cysteine of a prolipoprotein, the first step in the formation of mature lipoproteins. This Prochlorococcus marinus (strain NATL1A) protein is Phosphatidylglycerol--prolipoprotein diacylglyceryl transferase.